We begin with the raw amino-acid sequence, 151 residues long: FAD synthase (151 aa).

ATP is bound by residues 12–13, 17–20, D97, and Y125; these read TF and HPGH.

This sequence belongs to the archaeal FAD synthase family. In terms of assembly, homodimer. Requires a divalent metal cation as cofactor.

The enzyme catalyses FMN + ATP + H(+) = FAD + diphosphate. Its pathway is cofactor biosynthesis; FAD biosynthesis; FAD from FMN: step 1/1. Functionally, catalyzes the transfer of the AMP portion of ATP to flavin mononucleotide (FMN) to produce flavin adenine dinucleotide (FAD) coenzyme. This is FAD synthase from Methanocaldococcus sp. (strain FS406-22).